A 572-amino-acid chain; its full sequence is Urease subunit alpha (572 aa).

The Urease domain maps to 136–572; that stretch reads GGIDTHIHWI…VPLAQRYFLF (437 aa). The Ni(2+) site is built by His-141, His-143, and Lys-224. The residue at position 224 (Lys-224) is an N6-carboxylysine. His-226 provides a ligand contact to substrate. Positions 253 and 279 each coordinate Ni(2+). The active-site Proton donor is the His-327. Ni(2+) is bound at residue Asp-367.

This sequence belongs to the metallo-dependent hydrolases superfamily. Urease alpha subunit family. Heterotrimer of UreA (gamma), UreB (beta) and UreC (alpha) subunits. Three heterotrimers associate to form the active enzyme. It depends on Ni cation as a cofactor. Carboxylation allows a single lysine to coordinate two nickel ions.

It localises to the cytoplasm. It carries out the reaction urea + 2 H2O + H(+) = hydrogencarbonate + 2 NH4(+). It participates in nitrogen metabolism; urea degradation; CO(2) and NH(3) from urea (urease route): step 1/1. The chain is Urease subunit alpha from Actinobacillus pleuropneumoniae (Haemophilus pleuropneumoniae).